The primary structure comprises 169 residues: Large ribosomal subunit protein uL10 (169 aa).

The protein belongs to the universal ribosomal protein uL10 family. As to quaternary structure, part of the ribosomal stalk of the 50S ribosomal subunit. The N-terminus interacts with L11 and the large rRNA to form the base of the stalk. The C-terminus forms an elongated spine to which L12 dimers bind in a sequential fashion forming a multimeric L10(L12)X complex.

Its function is as follows. Forms part of the ribosomal stalk, playing a central role in the interaction of the ribosome with GTP-bound translation factors. The chain is Large ribosomal subunit protein uL10 from Deinococcus geothermalis (strain DSM 11300 / CIP 105573 / AG-3a).